Reading from the N-terminus, the 100-residue chain is Omega toxin Ap2 (100 aa).

The N-terminal stretch at 1–22 (MNTTQVILFAVVLVLTVTVGQA) is a signal peptide. Positions 23 to 57 (DEDSAETSLLRKLEEAEASMFGQYLEESKNSPEQR) are excised as a propeptide. Intrachain disulfides connect Cys58/Cys74, Cys65/Cys79, and Cys73/Cys94. Ser99 bears the Serine amide mark.

The protein belongs to the neurotoxin 14 (magi-1) family. 08 (Ltx-4) subfamily. Expressed by the venom duct.

It localises to the secreted. Inhibits 31.17% of Cav2.1/CACNA1A current at 1 uM concentration. This is Omega toxin Ap2 from Acanthoscurria paulensis (Brazilian giant black tarantula spider).